The following is a 494-amino-acid chain: Neuronal pentraxin receptor (494 aa).

Residues 1–2 are Cytoplasmic-facing; that stretch reads MK. A helical; Signal-anchor for type II membrane protein membrane pass occupies residues 3-23; it reads FLAVLLAAGMLAFLGAVICII. Residues 24–494 are Extracellular-facing; it reads ASVPLAASPA…FDVCKRRAKA (471 aa). Positions 37–80 are disordered; the sequence is PGGTDNASAASAAGAPGPQRSLSALQGAGGSAGPSVLPGEPAAS. N-linked (GlcNAc...) asparagine glycosylation occurs at Asn-42. Composition is skewed to low complexity over residues 43 to 62 and 69 to 80; these read ASAASAAGAPGPQRSLSALQ and GPSVLPGEPAAS. Asn-211 is a glycosylation site (N-linked (GlcNAc...) asparagine). In terms of domain architecture, Pentraxin (PTX) spans 286 to 488; sequence DAFKVSIPIR…GAKKAAFDVC (203 aa). Cys-316 and Cys-377 are disulfide-bonded. Asn-341, Glu-419, Gln-420, Asp-421, and Gln-431 together coordinate Ca(2+). Asn-457 carries N-linked (GlcNAc...) asparagine glycosylation.

As to quaternary structure, interacts with KLHL2. Heteropentamer with NPTX1 and/or NPTX2. Also binds taipoxin-associated calcium-binding protein 49 (TCBP49/RCN2). Ca(2+) serves as cofactor. N-glycosylated. In terms of processing, ubiquitinated by a cullin-RING-based BCR (BTB-CUL3-RBX1) E3 ubiquitin-protein ligase complex containing KLHL2. In terms of tissue distribution, brain specific.

Its subcellular location is the membrane. Functionally, may be involved in mediating uptake of synaptic material during synapse remodeling or in mediating the synaptic clustering of AMPA glutamate receptors at a subset of excitatory synapses. The protein is Neuronal pentraxin receptor (Nptxr) of Rattus norvegicus (Rat).